The chain runs to 317 residues: Metaxin-1 (317 aa).

Residues Lys-38, Lys-41, and Lys-78 each participate in a glycyl lysine isopeptide (Lys-Gly) (interchain with G-Cter in ubiquitin) cross-link. A helical membrane pass occupies residues 164–184; sequence EELEKELYQEAQECLTLLSQR.

It belongs to the metaxin family. Interacts with MTX2/metaxin-2. Associates with the mitochondrial contact site and cristae organizing system (MICOS) complex, composed of at least MICOS10/MIC10, CHCHD3/MIC19, CHCHD6/MIC25, APOOL/MIC27, IMMT/MIC60, APOO/MIC23/MIC26 and QIL1/MIC13. This complex was also known under the names MINOS or MitOS complex. The MICOS complex associates with mitochondrial outer membrane proteins SAMM50, MTX1 and MTX2 (together described as components of the mitochondrial outer membrane sorting assembly machinery (SAM) complex) and DNAJC11, mitochondrial inner membrane protein TMEM11 and with HSPA9. The MICOS and SAM complexes together with DNAJC11 are part of a large protein complex spanning both membranes termed the mitochondrial intermembrane space bridging (MIB) complex. Interacts with ARMC1. Ubiquitinated by PRKN during mitophagy, leading to its degradation and enhancement of mitophagy. Deubiquitinated by USP30.

The protein localises to the mitochondrion outer membrane. Functionally, involved in transport of proteins into the mitochondrion. Essential for embryonic development. The polypeptide is Metaxin-1 (MTX1) (Bos taurus (Bovine)).